A 681-amino-acid polypeptide reads, in one-letter code: RNA polymerase sigma factor RpoD (681 aa).

Disordered regions lie at residues 1 to 60 (MKKK…ETAK) and 239 to 270 (DDDENSVSDPKKDDDSEEDEENEERKKVVSEK). The span at 261–270 (EERKKVVSEK) shows a compositional bias: basic and acidic residues. The segment at 446–516 (MAKSNLRLVV…SRAIADQART (71 aa)) is sigma-70 factor domain-2. An Interaction with polymerase core subunit RpoC motif is present at residues 470 to 473 (DLIQ). A sigma-70 factor domain-3 region spans residues 525-601 (DTINRINKVM…DKNIVSSIDH (77 aa)). The segment at 614–668 (VLDQLNEREKAVIRMRFGLLDDESDRTLEEIGKELNVTRERVRQIESSAIKKLRS) is sigma-70 factor domain-4. Positions 641 to 660 (LEEIGKELNVTRERVRQIES) form a DNA-binding region, H-T-H motif.

It belongs to the sigma-70 factor family. RpoD/SigA subfamily. In terms of assembly, interacts transiently with the RNA polymerase catalytic core.

The protein resides in the cytoplasm. Sigma factors are initiation factors that promote the attachment of RNA polymerase to specific initiation sites and are then released. This sigma factor is the primary sigma factor during exponential growth. The chain is RNA polymerase sigma factor RpoD from Helicobacter pylori (strain J99 / ATCC 700824) (Campylobacter pylori J99).